Here is a 189-residue protein sequence, read N- to C-terminus: Potassium-transporting ATPase KdpC subunit (189 aa).

Residues 6-26 (PAILFFIVFTILCGGVYPAVV) traverse the membrane as a helical segment.

It belongs to the KdpC family. In terms of assembly, the system is composed of three essential subunits: KdpA, KdpB and KdpC.

Its subcellular location is the cell inner membrane. Its function is as follows. Part of the high-affinity ATP-driven potassium transport (or Kdp) system, which catalyzes the hydrolysis of ATP coupled with the electrogenic transport of potassium into the cytoplasm. This subunit acts as a catalytic chaperone that increases the ATP-binding affinity of the ATP-hydrolyzing subunit KdpB by the formation of a transient KdpB/KdpC/ATP ternary complex. In Geotalea uraniireducens (strain Rf4) (Geobacter uraniireducens), this protein is Potassium-transporting ATPase KdpC subunit.